The primary structure comprises 74 residues: Sec-independent protein translocase protein TatA (74 aa).

Residues 1 to 21 (MGSIGMTELLLIFGIIVLLFG) traverse the membrane as a helical segment.

This sequence belongs to the TatA/E family. Forms a complex with TatC.

Its subcellular location is the cell inner membrane. Its function is as follows. Part of the twin-arginine translocation (Tat) system that transports large folded proteins containing a characteristic twin-arginine motif in their signal peptide across membranes. TatA could form the protein-conducting channel of the Tat system. In Sulfurihydrogenibium sp. (strain YO3AOP1), this protein is Sec-independent protein translocase protein TatA.